The sequence spans 868 residues: B-cell receptor CD22 (868 aa).

A signal peptide spans 1 to 21; sequence MRVHYLWLLLILGHVASARYS. The 127-residue stretch at 22–148 folds into the Ig-like V-type domain; that stretch reads SANDWTVDHP…MEPIHLNVSE (127 aa). The Extracellular segment spans residues 22 to 708; the sequence is SANDWTVDHP…YYSPETIGKR (687 aa). Intrachain disulfides connect cysteine 41–cysteine 177, cysteine 46–cysteine 112, and cysteine 171–cysteine 235. Residues asparagine 111 and asparagine 122 are each glycosylated (N-linked (GlcNAc...) asparagine). Residue arginine 130 coordinates N-acetylneuraminate. Asparagine 145, asparagine 174, asparagine 271, asparagine 281, asparagine 384, asparagine 414, asparagine 466, asparagine 567, and asparagine 595 each carry an N-linked (GlcNAc...) asparagine glycan. 6 consecutive Ig-like C2-type domains span residues 153–250, 257–347, 352–435, 440–521, 526–603, and 614–697; these read PYIQ…RTVR, PKLE…VELT, PEPS…AKLD, PKAV…VILN, PRDV…ETLS, and PRRL…STLT. Cystine bridges form between cysteine 278-cysteine 330, cysteine 374-cysteine 417, cysteine 463-cysteine 505, and cysteine 550-cysteine 592. Cysteine 637 and cysteine 680 are disulfide-bonded. A helical membrane pass occupies residues 709 to 727; sequence VALGLGFCLTICILAIWGM. Topologically, residues 728-868 are cytoplasmic; sequence KIQKKWKQNR…EDVDYVTLKH (141 aa). Polar residues predominate over residues 738–752; the sequence is SQQGLQENSSGQSFF. A disordered region spans residues 738–772; it reads SQQGLQENSSGQSFFVRNKKARRTPLSEGPQSQGC. Serine 746, serine 747, and serine 750 each carry phosphoserine. The ITIM motif 1 motif lies at 781–786; the sequence is VSYAIL. Tyrosine 783 is modified (phosphotyrosine). The tract at residues 790–812 is disordered; the sequence is ESDTHNTGDAGTPATQAPPPNNS. A phosphotyrosine mark is found at tyrosine 828, tyrosine 843, and tyrosine 863. 2 consecutive short sequence motifs (ITIM motif) follow at residues 841–846 and 861–866; these read IHYSEL and VDYVTL.

The protein belongs to the immunoglobulin superfamily. SIGLEC (sialic acid binding Ig-like lectin) family. In terms of assembly, predominantly monomer of isoform CD22-beta. Also found as heterodimer of isoform CD22-beta and a shorter isoform. Interacts with PTPN6/SHP-1, LYN, SYK, PIK3R1/PIK3R2 and PLCG1 upon phosphorylation. Interacts with GRB2, INPP5D and SHC1 upon phosphorylation. May form a complex with INPP5D/SHIP, GRB2 and SHC1. Phosphorylated on tyrosine residues by LYN. Post-translationally, phosphorylation of Tyr-783 and Tyr-843 are involved in binding to SYK. Phosphorylation of Tyr-828 is involved in binding to GRB2. Phosphorylation of Tyr-863 is involved in binding to SYK, PLCG2 and PIK3R1/PIK3R2. B-lymphocytes.

The protein resides in the cell membrane. Functionally, most highly expressed siglec (sialic acid-binding immunoglobulin-like lectin) on B-cells that plays a role in various aspects of B-cell biology including differentiation, antigen presentation, and trafficking to bone marrow. Binds to alpha 2,6-linked sialic acid residues of surface molecules such as CD22 itself, CD45 and IgM in a cis configuration. Can also bind to ligands on other cells as an adhesion molecule in a trans configuration. Acts as an inhibitory coreceptor on the surface of B-cells and inhibits B-cell receptor induced signaling, characterized by inhibition of the calcium mobilization and cellular activation. Mechanistically, the immunoreceptor tyrosine-based inhibitory motif domain is phosphorylated by the Src kinase LYN, which in turn leads to the recruitment of the protein tyrosine phosphatase 1/PTPN6, leading to the negative regulation of BCR signaling. If this negative signaling from is of sufficient strength, apoptosis of the B-cell can be induced. The protein is B-cell receptor CD22 of Mus musculus (Mouse).